The sequence spans 81 residues: ATP synthase subunit c, chloroplastic (81 aa).

The next 2 helical transmembrane spans lie at 3 to 23 and 57 to 77; these read PIIS…ASIG and LAFM…LLFA.

It belongs to the ATPase C chain family. In terms of assembly, F-type ATPases have 2 components, F(1) - the catalytic core - and F(0) - the membrane proton channel. F(1) has five subunits: alpha(3), beta(3), gamma(1), delta(1), epsilon(1). F(0) has four main subunits: a(1), b(1), b'(1) and c(10-14). The alpha and beta chains form an alternating ring which encloses part of the gamma chain. F(1) is attached to F(0) by a central stalk formed by the gamma and epsilon chains, while a peripheral stalk is formed by the delta, b and b' chains.

It localises to the plastid. Its subcellular location is the chloroplast thylakoid membrane. F(1)F(0) ATP synthase produces ATP from ADP in the presence of a proton or sodium gradient. F-type ATPases consist of two structural domains, F(1) containing the extramembraneous catalytic core and F(0) containing the membrane proton channel, linked together by a central stalk and a peripheral stalk. During catalysis, ATP synthesis in the catalytic domain of F(1) is coupled via a rotary mechanism of the central stalk subunits to proton translocation. Functionally, key component of the F(0) channel; it plays a direct role in translocation across the membrane. A homomeric c-ring of between 10-14 subunits forms the central stalk rotor element with the F(1) delta and epsilon subunits. The chain is ATP synthase subunit c, chloroplastic from Welwitschia mirabilis (Tree tumbo).